Reading from the N-terminus, the 187-residue chain is Macro domain-containing protein MM_0177 (187 aa).

Residues 8–187 (VEEGIRMELN…SIKKALSKIL (180 aa)) enclose the Macro domain.

This sequence belongs to the MacroD-type family.

The sequence is that of Macro domain-containing protein MM_0177 from Methanosarcina mazei (strain ATCC BAA-159 / DSM 3647 / Goe1 / Go1 / JCM 11833 / OCM 88) (Methanosarcina frisia).